The following is a 272-amino-acid chain: Phosphoglycolate phosphatase (272 aa).

The active-site Nucleophile is aspartate 19. The Mg(2+) site is built by aspartate 19, aspartate 21, and aspartate 182.

The protein belongs to the HAD-like hydrolase superfamily. CbbY/CbbZ/Gph/YieH family. It depends on Mg(2+) as a cofactor.

It catalyses the reaction 2-phosphoglycolate + H2O = glycolate + phosphate. Its pathway is organic acid metabolism; glycolate biosynthesis; glycolate from 2-phosphoglycolate: step 1/1. In terms of biological role, specifically catalyzes the dephosphorylation of 2-phosphoglycolate. Is involved in the dissimilation of the intracellular 2-phosphoglycolate formed during the DNA repair of 3'-phosphoglycolate ends, a major class of DNA lesions induced by oxidative stress. The polypeptide is Phosphoglycolate phosphatase (Pseudomonas syringae pv. tomato (strain ATCC BAA-871 / DC3000)).